A 160-amino-acid polypeptide reads, in one-letter code: MAKQKKQSPGTIALNKKALHDYFIEQKFEAGLVLAGWEVKSLRAGKAQLVDSYVLLKDGEAWLMGAHITPLTSASTHVIADPTRTRKLLLNKRELGKLFGAVQQKGYACVALSLYWKKHMIKCEIALAKGKKEFDKRHTEKERDSDREIQRAMRTKGKDD.

Residues 131 to 160 form a disordered region; sequence KKEFDKRHTEKERDSDREIQRAMRTKGKDD.

It belongs to the SmpB family.

Its subcellular location is the cytoplasm. Functionally, required for rescue of stalled ribosomes mediated by trans-translation. Binds to transfer-messenger RNA (tmRNA), required for stable association of tmRNA with ribosomes. tmRNA and SmpB together mimic tRNA shape, replacing the anticodon stem-loop with SmpB. tmRNA is encoded by the ssrA gene; the 2 termini fold to resemble tRNA(Ala) and it encodes a 'tag peptide', a short internal open reading frame. During trans-translation Ala-aminoacylated tmRNA acts like a tRNA, entering the A-site of stalled ribosomes, displacing the stalled mRNA. The ribosome then switches to translate the ORF on the tmRNA; the nascent peptide is terminated with the 'tag peptide' encoded by the tmRNA and targeted for degradation. The ribosome is freed to recommence translation, which seems to be the essential function of trans-translation. This Stutzerimonas stutzeri (strain A1501) (Pseudomonas stutzeri) protein is SsrA-binding protein.